The chain runs to 29 residues: Brevinin-2Rc (29 aa).

A disulfide bond links Cys-23 and Cys-29.

In terms of tissue distribution, expressed by the skin glands.

The protein resides in the secreted. Functionally, antimicrobial peptide. This Pelophylax ridibundus (Marsh frog) protein is Brevinin-2Rc.